The primary structure comprises 166 residues: Large ribosomal subunit protein uL10 (166 aa).

This sequence belongs to the universal ribosomal protein uL10 family. Part of the ribosomal stalk of the 50S ribosomal subunit. The N-terminus interacts with L11 and the large rRNA to form the base of the stalk. The C-terminus forms an elongated spine to which L12 dimers bind in a sequential fashion forming a multimeric L10(L12)X complex.

Forms part of the ribosomal stalk, playing a central role in the interaction of the ribosome with GTP-bound translation factors. This chain is Large ribosomal subunit protein uL10, found in Aeromonas salmonicida (strain A449).